A 342-amino-acid chain; its full sequence is MQQLMTLLSPPLSHSSLLPTVTTKFGSPRLVTTCMGHAGRKNIKDKVVLITGTTGTGKSRLSVDLATRFFPAEIINSDKMQIYKGFEIVTNLIPLHEQGGVPHHLLGQFHPQDGELTPAEFRSLATLSISKLISSKKLPIVVGGSNSFNHALLAERFDPDIDPFSPGSSLSTICSDLRYKCCILWVDVLEPVLFQHLCNRVDQMIESGLVEQLAELYDPVVDSGRRLGVRKTIGVEEFDRYFRVYPKEMDKGIWDLARKAAYEETVKGMKERTCRLVKKQKEKIMKLIRGGWEIKRLDATAAIMAELNQSTAKGEGKNGREIWEKHIVDESVEIVKKFLLEV.

A chloroplast-targeting transit peptide spans 1 to 33; sequence MQQLMTLLSPPLSHSSLLPTVTTKFGSPRLVTT. 52–59 provides a ligand contact to ATP; sequence GTTGTGKS.

It belongs to the IPP transferase family. Expressed in siliques, at the mRNA level.

It localises to the plastid. Its subcellular location is the chloroplast. The catalysed reaction is dimethylallyl diphosphate + ADP = N(6)-(dimethylallyl)adenosine 5'-diphosphate + diphosphate. It catalyses the reaction dimethylallyl diphosphate + ATP = N(6)-(dimethylallyl)adenosine 5'-triphosphate + diphosphate. Its function is as follows. Involved in cytokinin biosynthesis. Catalyzes the transfer of an isopentenyl group from dimethylallyl diphosphate (DMAPP) to ATP and ADP. This is Adenylate isopentenyltransferase 6, chloroplastic (IPT6) from Arabidopsis thaliana (Mouse-ear cress).